A 429-amino-acid chain; its full sequence is Ribosomal RNA small subunit methyltransferase B (429 aa).

S-adenosyl-L-methionine-binding positions include 254-260, aspartate 277, aspartate 303, and aspartate 322; that span reads CAAPGGK. Residue cysteine 375 is the Nucleophile of the active site.

The protein belongs to the class I-like SAM-binding methyltransferase superfamily. RsmB/NOP family.

The protein resides in the cytoplasm. The enzyme catalyses cytidine(967) in 16S rRNA + S-adenosyl-L-methionine = 5-methylcytidine(967) in 16S rRNA + S-adenosyl-L-homocysteine + H(+). In terms of biological role, specifically methylates the cytosine at position 967 (m5C967) of 16S rRNA. This is Ribosomal RNA small subunit methyltransferase B from Shigella flexneri serotype 5b (strain 8401).